The primary structure comprises 542 residues: L-ornithine N(5)-monooxygenase (542 aa).

FAD-binding positions include 45 to 53 and glutamine 64; that span reads EKHEVFRWH. Lysine 69 is a substrate binding site. Position 218-221 (218-221) interacts with NADP(+); that stretch reads SGQS. Substrate-binding positions include 263-266 and asparagine 294; that span reads NEIF. NADP(+) is bound at residue 294-296; that stretch reads NYS. The tract at residues 443–472 is disordered; it reads FFHDSSPSTASSSTVSTPPTSPETSRFSSP. Over residues 447-472 the composition is skewed to low complexity; that stretch reads SSPSTASSSTVSTPPTSPETSRFSSP. 518–520 provides a ligand contact to FAD; sequence TLL. Serine 521 is a substrate binding site.

It belongs to the lysine N(6)-hydroxylase/L-ornithine N(5)-oxygenase family. In terms of assembly, homotetramer. It depends on FAD as a cofactor.

It carries out the reaction L-ornithine + NADPH + O2 = N(5)-hydroxy-L-ornithine + NADP(+) + H2O. The enzyme catalyses L-ornithine + NADH + O2 = N(5)-hydroxy-L-ornithine + NAD(+) + H2O. It participates in siderophore biosynthesis. In terms of biological role, L-ornithine N(5)-monooxygenase; part of the gene cluster that mediates the biosynthesis of coprinoferrin, an acylated tripeptide hydroxamate siderophore. The biosynthesis of coprinoferrin depends on the hydroxylation of ornithine to N(5)-hydroxyornithine, catalyzed by the monooxygenase cpf2. The second step, the acylation of N(5)-hydroxy-L-ornithine to yield N(5)-hexanoyl-N(5)-hydroxyl-L-ornithine is catalyzed by a not yet identified acyltransferase. Finally, assembly of coprinoferrin is catalyzed by the nonribosomal peptide synthase (NRPS) cpf1 via amide bond formation between three N(5)-hexanoyl-N(5)-hydroxyl-L-ornithine molecules to release the linear trimer. Interestingly, proteins seemingly not directly related to biosynthesis, such as transcription factors, replication factors, and autophagy-related proteins, are conserved among the clusters homologous to the coprinoferrin cluster, suggesting that the cluster may also play developmental and cell biological functions. This Coprinopsis cinerea (strain Okayama-7 / 130 / ATCC MYA-4618 / FGSC 9003) (Inky cap fungus) protein is L-ornithine N(5)-monooxygenase.